We begin with the raw amino-acid sequence, 685 residues long: Nucleolar protein 4 (685 aa).

Positions 1–21 (MEETIENVEVPSSNVSKQNDD) are disordered. The RRM 1 domain occupies 26-103 (KTLFVRSIPQ…HILRVDIAKR (78 aa)). A compositionally biased stretch (basic and acidic residues) spans 106–123 (RSKKTSEVVEKSTPESSE). Residues 106 to 142 (RSKKTSEVVEKSTPESSEKITGQNNEDEDDADGEDSM) form a disordered region. A compositionally biased stretch (acidic residues) spans 130 to 140 (NEDEDDADGED). In terms of domain architecture, RRM 2 spans 147–225 (PKLIIRNMPW…RKVAVDFAVQ (79 aa)). The span at 231–242 (DYKKAQPEMNDK) shows a compositional bias: basic and acidic residues. Residues 231–285 (DYKKAQPEMNDKDDNESGNEDAEENHDDEEDENEEEDRQVDQASKNKESKRKAQN) form a disordered region. A compositionally biased stretch (acidic residues) spans 243 to 268 (DDNESGNEDAEENHDDEEDENEEEDR). At Ser247 the chain carries Phosphoserine. 2 consecutive RRM domains span residues 290–383 (FSVF…PTLV) and 462–612 (TRLA…FAIE). Thr379 is modified (phosphothreonine). Positions 622-631 (EQLKQARTKR) are enriched in basic residues. A disordered region spans residues 622-685 (EQLKQARTKR…FKRKRKHAKK (64 aa)). A compositionally biased stretch (basic and acidic residues) spans 645–672 (SENKKPKKEEATTPTNPDDKKMGDDIKR). Basic residues predominate over residues 674–685 (IGFKRKRKHAKK).

As to quaternary structure, interacts with NOP1.

It is found in the nucleus. The protein resides in the nucleolus. Functionally, required for 60S ribosomal subunit synthesis. Probably involved in the processing of 27S rRNA to produce mature 25S rRNA. In Saccharomyces cerevisiae (strain ATCC 204508 / S288c) (Baker's yeast), this protein is Nucleolar protein 4 (NOP4).